The chain runs to 239 residues: DNA repair protein RecO (239 aa).

Belongs to the RecO family.

Involved in DNA repair and RecF pathway recombination. The sequence is that of DNA repair protein RecO from Stenotrophomonas maltophilia (strain K279a).